Consider the following 323-residue polypeptide: Phosphatidylethanolamine:ceramide ethanolaminephosphotransferase (323 aa).

The Cytoplasmic segment spans residues 1–26; it reads MAVPPVEMYSGSFWNRMRKPLPLRTQ. Residues 27–47 form a helical membrane-spanning segment; that stretch reads VIRFTVVFVIVSFILAVALQI. The Extracellular segment spans residues 48–73; the sequence is THERMPDPKVTKPLPDLGFEVLHKYP. The chain crosses the membrane as a helical span at residues 74–94; sequence FLFSVADCCIGFLNILSVFTA. At 95–147 the chain is on the cytoplasmic side; sequence FKLYLLHRHCVGSGEPELPCNIPGVSRFFLSVWLCKENCRIELRNVHTIAWIR. The chain crosses the membrane as a helical span at residues 148–168; that stretch reads FITSYALLLLSRSVIMVVTSL. Over 169 to 211 the chain is Extracellular; the sequence is PNPDDLCQDPPKIENRVKDVILTVLTAGAGSIHCGDLMYSGHT. The active site involves H210. A helical membrane pass occupies residues 212 to 232; that stretch reads VILTLHLMFHWIYGAMVHWSF. Position 233 (R233) is a topological domain, cytoplasmic. A helical transmembrane segment spans residues 234 to 254; the sequence is PVVTVVAIFGYYCIVASRFHY. Catalysis depends on residues H253 and D257. Residues 255–257 are Extracellular-facing; it reads TDD. Residues 258 to 278 traverse the membrane as a helical segment; that stretch reads VLVAIYLTIATFIAVGHNADG. Topologically, residues 279–323 are cytoplasmic; the sequence is APWQLQLFIRWLPCCGANSREVTEDGVPVAIVIKNEEMMNFEGKS.

This sequence belongs to the sphingomyelin synthase family.

It is found in the membrane. Bidirectional lipid ethanolaminephosphotransferase capable of converting phosphatidylethanolamine (PE) and ceramide to ethanolamine-phosphorylceramide (EPC) and diacylglycerol (DAG) and vice versa. Direction is dependent on the relative concentrations of DAG and ceramide as phosphoethanolamine acceptors. Does not function strictly as a SM synthase. Essential for viability of the pathogenic bloodstream stage of this human protozoan parasite and, consequently, can be considered as potential drug target. This Trypanosoma brucei brucei (strain 927/4 GUTat10.1) protein is Phosphatidylethanolamine:ceramide ethanolaminephosphotransferase.